A 142-amino-acid chain; its full sequence is Hemoglobin subunit alpha-1 (142 aa).

Residues Lys2–Arg142 enclose the Globin domain. His59 contributes to the O2 binding site. His88 is a heme b binding site.

This sequence belongs to the globin family. In terms of assembly, major hemoglobin is a heterotetramer of two alpha-1 chains and two beta-1 chains. In terms of tissue distribution, red blood cells.

Functionally, involved in oxygen transport from the lung to the various peripheral tissues. In Pleurodeles waltl (Iberian ribbed newt), this protein is Hemoglobin subunit alpha-1.